A 174-amino-acid chain; its full sequence is MQGEEEGLSRYRLRPPTPREERLVEGFLRAIGFKVNPYAEGMTVLDPGGKFKEVFYLPWGLRRAVERLPLHYSAGLNLGSIGERGFRPSLHLARELAPLCGSPVKCIRLSPRGEKLFLYSRDVYGDNIASHTSGAALVVGSNGQPLGWGVGLSRDGLLIVKPLRDLGWYLRRGG.

Belongs to the UPF0113 family.

The sequence is that of UPF0113 protein APE_0516.1 from Aeropyrum pernix (strain ATCC 700893 / DSM 11879 / JCM 9820 / NBRC 100138 / K1).